Consider the following 394-residue polypeptide: NAD(P)H-quinone oxidoreductase subunit H (394 aa).

This sequence belongs to the complex I 49 kDa subunit family. In terms of assembly, NDH-1 can be composed of about 15 different subunits; different subcomplexes with different compositions have been identified which probably have different functions.

It is found in the cellular thylakoid membrane. It carries out the reaction a plastoquinone + NADH + (n+1) H(+)(in) = a plastoquinol + NAD(+) + n H(+)(out). It catalyses the reaction a plastoquinone + NADPH + (n+1) H(+)(in) = a plastoquinol + NADP(+) + n H(+)(out). Its function is as follows. NDH-1 shuttles electrons from an unknown electron donor, via FMN and iron-sulfur (Fe-S) centers, to quinones in the respiratory and/or the photosynthetic chain. The immediate electron acceptor for the enzyme in this species is believed to be plastoquinone. Couples the redox reaction to proton translocation, and thus conserves the redox energy in a proton gradient. Cyanobacterial NDH-1 also plays a role in inorganic carbon-concentration. The protein is NAD(P)H-quinone oxidoreductase subunit H of Acaryochloris marina (strain MBIC 11017).